The following is a 208-amino-acid chain: Uracil phosphoribosyltransferase (208 aa).

5-phospho-alpha-D-ribose 1-diphosphate is bound by residues Arg77, Arg102, and 128–136; that span reads DPMLATGGT. Uracil is bound by residues Ile191 and 196 to 198; that span reads GDI. Asp197 serves as a coordination point for 5-phospho-alpha-D-ribose 1-diphosphate.

It belongs to the UPRTase family. The cofactor is Mg(2+).

The enzyme catalyses UMP + diphosphate = 5-phospho-alpha-D-ribose 1-diphosphate + uracil. It functions in the pathway pyrimidine metabolism; UMP biosynthesis via salvage pathway; UMP from uracil: step 1/1. Allosterically activated by GTP. In terms of biological role, catalyzes the conversion of uracil and 5-phospho-alpha-D-ribose 1-diphosphate (PRPP) to UMP and diphosphate. The chain is Uracil phosphoribosyltransferase from Aquifex aeolicus (strain VF5).